The following is a 210-amino-acid chain: Ribosomal RNA large subunit methyltransferase E (210 aa).

S-adenosyl-L-methionine-binding residues include glycine 67, tryptophan 69, aspartate 87, aspartate 103, and aspartate 128. Catalysis depends on lysine 168, which acts as the Proton acceptor.

This sequence belongs to the class I-like SAM-binding methyltransferase superfamily. RNA methyltransferase RlmE family.

It is found in the cytoplasm. It carries out the reaction uridine(2552) in 23S rRNA + S-adenosyl-L-methionine = 2'-O-methyluridine(2552) in 23S rRNA + S-adenosyl-L-homocysteine + H(+). Specifically methylates the uridine in position 2552 of 23S rRNA at the 2'-O position of the ribose in the fully assembled 50S ribosomal subunit. In Psychrobacter arcticus (strain DSM 17307 / VKM B-2377 / 273-4), this protein is Ribosomal RNA large subunit methyltransferase E.